Here is a 709-residue protein sequence, read N- to C-terminus: Phosphoribosylformylglycinamidine synthase subunit PurL (709 aa).

The active site involves His36. Tyr39 and Lys80 together coordinate ATP. Glu82 provides a ligand contact to Mg(2+). Substrate-binding positions include 83–86 (SHNH) and Arg105. Residue His84 is the Proton acceptor of the active site. Asp106 lines the Mg(2+) pocket. A substrate-binding site is contributed by Gln226. Asp252 contributes to the Mg(2+) binding site. 294-296 (ETQ) provides a ligand contact to substrate. Residues Asp470 and Gly507 each contribute to the ATP site. Ser510 contributes to the substrate binding site.

This sequence belongs to the FGAMS family. As to quaternary structure, monomer. Part of the FGAM synthase complex composed of 1 PurL, 1 PurQ and 2 PurS subunits.

It localises to the cytoplasm. The catalysed reaction is N(2)-formyl-N(1)-(5-phospho-beta-D-ribosyl)glycinamide + L-glutamine + ATP + H2O = 2-formamido-N(1)-(5-O-phospho-beta-D-ribosyl)acetamidine + L-glutamate + ADP + phosphate + H(+). The protein operates within purine metabolism; IMP biosynthesis via de novo pathway; 5-amino-1-(5-phospho-D-ribosyl)imidazole from N(2)-formyl-N(1)-(5-phospho-D-ribosyl)glycinamide: step 1/2. Functionally, part of the phosphoribosylformylglycinamidine synthase complex involved in the purines biosynthetic pathway. Catalyzes the ATP-dependent conversion of formylglycinamide ribonucleotide (FGAR) and glutamine to yield formylglycinamidine ribonucleotide (FGAM) and glutamate. The FGAM synthase complex is composed of three subunits. PurQ produces an ammonia molecule by converting glutamine to glutamate. PurL transfers the ammonia molecule to FGAR to form FGAM in an ATP-dependent manner. PurS interacts with PurQ and PurL and is thought to assist in the transfer of the ammonia molecule from PurQ to PurL. In Saccharolobus islandicus (strain Y.N.15.51 / Yellowstone #2) (Sulfolobus islandicus), this protein is Phosphoribosylformylglycinamidine synthase subunit PurL.